The primary structure comprises 249 residues: ATP synthase subunit a, chloroplastic (249 aa).

Helical transmembrane passes span 40 to 60 (QVLI…VIAI), 97 to 117 (VPFI…GALL), 136 to 156 (INTT…AGLS), 201 to 221 (LVVV…VMFL), and 222 to 242 (GLFT…AYIG).

The protein belongs to the ATPase A chain family. In terms of assembly, F-type ATPases have 2 components, CF(1) - the catalytic core - and CF(0) - the membrane proton channel. CF(1) has five subunits: alpha(3), beta(3), gamma(1), delta(1), epsilon(1). CF(0) has four main subunits: a, b, b' and c.

It localises to the plastid. It is found in the chloroplast thylakoid membrane. Functionally, key component of the proton channel; it plays a direct role in the translocation of protons across the membrane. The chain is ATP synthase subunit a, chloroplastic from Barbarea verna (Land cress).